The chain runs to 123 residues: Immunoglobulin lambda variable 5-45 (123 aa).

A signal peptide spans 1-19 (MAWTPLLLLFLSHCTGSLS). Positions 20 to 44 (QAVLTQPSSLSASPGASASLTCTLC) are framework-1. The Ig-like domain maps to 20 to 123 (QAVLTQPSSL…YCMIWHSSAS (104 aa)). Cys41 and Cys115 are joined by a disulfide. Positions 45-53 (SGINVGTYR) are complementarity-determining-1. The interval 54–70 (IYWYQQKPGSPPQYLLR) is framework-2. The segment at 68 to 92 (LLRYKSDSDKQQGSGVPSRFSGSKD) is disordered. A complementarity-determining-2 region spans residues 71-77 (YKSDSDK). Positions 78 to 92 (QQGSGVPSRFSGSKD) are enriched in polar residues. The tract at residues 78–115 (QQGSGVPSRFSGSKDASANAGILLISGLQSEDEADYYC) is framework-3. A complementarity-determining-3 region spans residues 116–123 (MIWHSSAS).

Immunoglobulins are composed of two identical heavy chains and two identical light chains; disulfide-linked.

It is found in the secreted. The protein resides in the cell membrane. In terms of biological role, v region of the variable domain of immunoglobulin light chains that participates in the antigen recognition. Immunoglobulins, also known as antibodies, are membrane-bound or secreted glycoproteins produced by B lymphocytes. In the recognition phase of humoral immunity, the membrane-bound immunoglobulins serve as receptors which, upon binding of a specific antigen, trigger the clonal expansion and differentiation of B lymphocytes into immunoglobulins-secreting plasma cells. Secreted immunoglobulins mediate the effector phase of humoral immunity, which results in the elimination of bound antigens. The antigen binding site is formed by the variable domain of one heavy chain, together with that of its associated light chain. Thus, each immunoglobulin has two antigen binding sites with remarkable affinity for a particular antigen. The variable domains are assembled by a process called V-(D)-J rearrangement and can then be subjected to somatic hypermutations which, after exposure to antigen and selection, allow affinity maturation for a particular antigen. This is Immunoglobulin lambda variable 5-45 from Homo sapiens (Human).